Here is a 156-residue protein sequence, read N- to C-terminus: Cytochrome c-type biogenesis protein CcmE 1 (156 aa).

The Cytoplasmic segment spans residues 1-8 (MNATRKQR). A helical; Signal-anchor for type II membrane protein membrane pass occupies residues 9–29 (LWLVIGVLTAAALAVTLIALA). Topologically, residues 30 to 156 (LQRNMSYLFT…AAAAPLSGVR (127 aa)) are periplasmic. Residues His-123 and Tyr-127 each coordinate heme.

This sequence belongs to the CcmE/CycJ family.

The protein resides in the cell inner membrane. In terms of biological role, heme chaperone required for the biogenesis of c-type cytochromes. Transiently binds heme delivered by CcmC and transfers the heme to apo-cytochromes in a process facilitated by CcmF and CcmH. This Xanthomonas campestris pv. campestris (strain 8004) protein is Cytochrome c-type biogenesis protein CcmE 1.